A 157-amino-acid chain; its full sequence is 6,7-dimethyl-8-ribityllumazine synthase (157 aa).

Residues tryptophan 27, 59-61 (AIE), and 81-83 (VVI) contribute to the 5-amino-6-(D-ribitylamino)uracil site. 86–87 (ET) contributes to the (2S)-2-hydroxy-3-oxobutyl phosphate binding site. Histidine 89 acts as the Proton donor in catalysis. Asparagine 114 serves as a coordination point for 5-amino-6-(D-ribitylamino)uracil. Arginine 128 serves as a coordination point for (2S)-2-hydroxy-3-oxobutyl phosphate.

This sequence belongs to the DMRL synthase family. In terms of assembly, homopentamer.

It carries out the reaction (2S)-2-hydroxy-3-oxobutyl phosphate + 5-amino-6-(D-ribitylamino)uracil = 6,7-dimethyl-8-(1-D-ribityl)lumazine + phosphate + 2 H2O + H(+). It functions in the pathway cofactor biosynthesis; riboflavin biosynthesis; riboflavin from 2-hydroxy-3-oxobutyl phosphate and 5-amino-6-(D-ribitylamino)uracil: step 1/2. Functionally, catalyzes the formation of 6,7-dimethyl-8-ribityllumazine by condensation of 5-amino-6-(D-ribitylamino)uracil with 3,4-dihydroxy-2-butanone 4-phosphate. This is the penultimate step in the biosynthesis of riboflavin. This is 6,7-dimethyl-8-ribityllumazine synthase from Mycolicibacterium vanbaalenii (strain DSM 7251 / JCM 13017 / BCRC 16820 / KCTC 9966 / NRRL B-24157 / PYR-1) (Mycobacterium vanbaalenii).